Here is a 293-residue protein sequence, read N- to C-terminus: tRNA pseudouridine synthase B (293 aa).

Catalysis depends on Asp-38, which acts as the Nucleophile.

Belongs to the pseudouridine synthase TruB family. Type 1 subfamily.

It carries out the reaction uridine(55) in tRNA = pseudouridine(55) in tRNA. Responsible for synthesis of pseudouridine from uracil-55 in the psi GC loop of transfer RNAs. The chain is tRNA pseudouridine synthase B from Microcystis aeruginosa (strain NIES-843 / IAM M-2473).